A 176-amino-acid polypeptide reads, in one-letter code: Protein GrpE (176 aa).

The disordered stretch occupies residues 1–31; that stretch reads MSEQKQEFENENAENSEHLQDENLQNIEDVE.

The protein belongs to the GrpE family. In terms of assembly, homodimer.

It localises to the cytoplasm. Its function is as follows. Participates actively in the response to hyperosmotic and heat shock by preventing the aggregation of stress-denatured proteins, in association with DnaK and GrpE. It is the nucleotide exchange factor for DnaK and may function as a thermosensor. Unfolded proteins bind initially to DnaJ; upon interaction with the DnaJ-bound protein, DnaK hydrolyzes its bound ATP, resulting in the formation of a stable complex. GrpE releases ADP from DnaK; ATP binding to DnaK triggers the release of the substrate protein, thus completing the reaction cycle. Several rounds of ATP-dependent interactions between DnaJ, DnaK and GrpE are required for fully efficient folding. This is Protein GrpE from Campylobacter jejuni subsp. doylei (strain ATCC BAA-1458 / RM4099 / 269.97).